The following is a 60-amino-acid chain: Large ribosomal subunit protein bL32 (60 aa).

The disordered stretch occupies residues 1–60; it reads MAVQQNKKSRSARDMRRSHDALSENALSVEKTTGEVHLRHHVSPEGVYRGRKVVDKGADE. Basic and acidic residues predominate over residues 11–22; it reads SARDMRRSHDAL.

This sequence belongs to the bacterial ribosomal protein bL32 family.

The chain is Large ribosomal subunit protein bL32 from Pseudomonas putida (strain ATCC 700007 / DSM 6899 / JCM 31910 / BCRC 17059 / LMG 24140 / F1).